The chain runs to 216 residues: MAGEIPDLIAEARTGTGKGAARQARREGNVPGIVYGGGIDPLAINIPFNVLLKRLKDGRFLSTLFNMKVEGQDDVRVICRNVQRDVVKDLPTHVDFMRLKRTSKIALFIPVEVIGEEECPGLKKGGVLTMVRPEVELRVTAGDIPEQITIDLTGLEIGDTVTISSVELPAGAKATIDRDFVIANLTAPSGLVSAESEEDEDAPAADEVPATEVSEE.

The disordered stretch occupies residues 191–216 (LVSAESEEDEDAPAADEVPATEVSEE). The span at 195–204 (ESEEDEDAPA) shows a compositional bias: acidic residues.

The protein belongs to the bacterial ribosomal protein bL25 family. CTC subfamily. As to quaternary structure, part of the 50S ribosomal subunit; part of the 5S rRNA/L5/L18/L25 subcomplex. Contacts the 5S rRNA. Binds to the 5S rRNA independently of L5 and L18.

Its function is as follows. This is one of the proteins that binds to the 5S RNA in the ribosome where it forms part of the central protuberance. The polypeptide is Large ribosomal subunit protein bL25 (Jannaschia sp. (strain CCS1)).